An 811-amino-acid polypeptide reads, in one-letter code: Auxin response factor 8 (811 aa).

Residues Phe126–Thr228 constitute a DNA-binding region (TF-B3). Disordered regions lie at residues His467–His496 and His544–Thr565. 2 stretches are compositionally biased toward polar residues: residues Tyr469–Leu482 and His544–Pro555. The PB1 domain maps to Lys705–Asp789.

The protein belongs to the ARF family. In terms of assembly, homodimers and heterodimers. In terms of tissue distribution, expressed in the whole plant.

The protein localises to the nucleus. Functionally, auxin response factors (ARFs) are transcriptional factors that bind specifically to the DNA sequence 5'-TGTCTC-3' found in the auxin-responsive promoter elements (AuxREs). Seems to act as transcriptional activator. Formation of heterodimers with Aux/IAA proteins may alter their ability to modulate early auxin response genes expression. Regulates both stamen and gynoecium maturation. Promotes jasmonic acid production. Partially redundant with ARF6. Involved in fruit initiation. Acts as an inhibitor to stop further carpel development in the absence of fertilization and the generation of signals required to initiate fruit and seed development. In Arabidopsis thaliana (Mouse-ear cress), this protein is Auxin response factor 8 (ARF8).